We begin with the raw amino-acid sequence, 284 residues long: Diaminopimelate epimerase (284 aa).

Substrate-binding residues include N20, Q53, and N73. C82 acts as the Proton donor in catalysis. Substrate-binding positions include 83 to 84, N167, N200, and 218 to 219; these read GN and ER. C227 acts as the Proton acceptor in catalysis. 228–229 lines the substrate pocket; that stretch reads GS.

Belongs to the diaminopimelate epimerase family. In terms of assembly, homodimer.

The protein localises to the cytoplasm. The enzyme catalyses (2S,6S)-2,6-diaminopimelate = meso-2,6-diaminopimelate. It participates in amino-acid biosynthesis; L-lysine biosynthesis via DAP pathway; DL-2,6-diaminopimelate from LL-2,6-diaminopimelate: step 1/1. In terms of biological role, catalyzes the stereoinversion of LL-2,6-diaminopimelate (L,L-DAP) to meso-diaminopimelate (meso-DAP), a precursor of L-lysine and an essential component of the bacterial peptidoglycan. This Xanthomonas campestris pv. campestris (strain ATCC 33913 / DSM 3586 / NCPPB 528 / LMG 568 / P 25) protein is Diaminopimelate epimerase.